A 272-amino-acid polypeptide reads, in one-letter code: Digeranylgeranylglyceryl phosphate synthase (272 aa).

Helical transmembrane passes span 16–36 (AFIA…EIIL), 79–99 (ALYY…IISL), 100–120 (ENGI…YDLK), 124–144 (FIGN…GGLI), 148–168 (VNLG…REII), 194–214 (AVML…LLYY), 217–237 (IFSI…VYSA), and 252–272 (ISKY…MGAL).

It belongs to the UbiA prenyltransferase family. DGGGP synthase subfamily. Mg(2+) is required as a cofactor.

Its subcellular location is the cell membrane. It catalyses the reaction sn-3-O-(geranylgeranyl)glycerol 1-phosphate + (2E,6E,10E)-geranylgeranyl diphosphate = 2,3-bis-O-(geranylgeranyl)-sn-glycerol 1-phosphate + diphosphate. The protein operates within membrane lipid metabolism; glycerophospholipid metabolism. Functionally, prenyltransferase that catalyzes the transfer of the geranylgeranyl moiety of geranylgeranyl diphosphate (GGPP) to the C2 hydroxyl of (S)-3-O-geranylgeranylglyceryl phosphate (GGGP). This reaction is the second ether-bond-formation step in the biosynthesis of archaeal membrane lipids. This chain is Digeranylgeranylglyceryl phosphate synthase, found in Methanosphaera stadtmanae (strain ATCC 43021 / DSM 3091 / JCM 11832 / MCB-3).